Consider the following 437-residue polypeptide: Coiled-coil domain-containing protein 78 (437 aa).

Coiled coils occupy residues 83–114, 147–287, and 360–408; these read HLRE…LHGN, EELK…QRQE, and QRLQ…YKQE.

Belongs to the CCDC78 family.

It is found in the cytoplasm. The protein localises to the cytoskeleton. Its subcellular location is the microtubule organizing center. The protein resides in the centrosome. It localises to the centriole. It is found in the perinuclear region. The protein localises to the cell membrane. Its subcellular location is the sarcolemma. The protein resides in the sarcoplasmic reticulum. Functionally, component of the deuterosome, a structure that promotes de novo centriole amplification in multiciliated cells that can generate more than 100 centrioles. Deuterosome-mediated centriole amplification occurs in terminally differentiated multiciliated cells (G1/0) and not in S phase. Essential for centriole amplification and is required for CEP152 localization to the deuterosome. This Mus musculus (Mouse) protein is Coiled-coil domain-containing protein 78 (Ccdc78).